A 388-amino-acid polypeptide reads, in one-letter code: Integrase (388 aa).

In terms of domain architecture, Core-binding (CB) spans 70–151; that stretch reads YTVADAVNDW…CLNRAVKRAM (82 aa). The Tyr recombinase domain maps to 173-379; the sequence is RPSKALTFAQ…VIQTGAVVMD (207 aa). Catalysis depends on residues arginine 208, lysine 249, arginine 330, and histidine 353. Tyrosine 363 functions as the O-(3'-phospho-DNA)-tyrosine intermediate in the catalytic mechanism.

The protein belongs to the 'phage' integrase family.

Required for integration of pSAM2. The protein is Integrase (int) of Streptomyces ambofaciens.